We begin with the raw amino-acid sequence, 303 residues long: Cyclin-dependent kinase 4 (303 aa).

Position 2 is an N-acetylalanine (Ala2). The Protein kinase domain maps to 6–295 (YEPVAEIGVG…AFRALQHSYL (290 aa)). ATP is bound by residues 12 to 20 (IGVGAYGTV) and Lys35. The tract at residues 50-56 (PVSTVRE) is required for binding D-type cyclins. Asp140 functions as the Proton acceptor in the catalytic mechanism. Thr172 carries the phosphothreonine; by CAK modification. At Ser300 the chain carries Phosphoserine.

Belongs to the protein kinase superfamily. CMGC Ser/Thr protein kinase family. CDC2/CDKX subfamily. Component of the D-CDK4 complex, composed of CDK4 and some D-type G1 cyclin (CCND1, CCND2 or CCND3). Interacts directly in the complex with CCND1, CCND2 or CCND3. Interacts with ZNF655. Forms a ternary complex, cyclin D-CDK4-CDKN1B, involved in modulating CDK4 enzymatic activity. Interacts directly with CDKN1B (phosphorylated on 'Tyr-88' and 'Tyr-89'); the interaction allows assembly of the cyclin D-CDK4 complex, Thr-172 phosphorylation, nuclear translocation and enhances the cyclin D-CDK4 complex activity. CDK4 activity is either inhibited or enhanced depending on stoichiometry of complex. The non-tyrosine-phosphorylated form of CDKN1B prevents T-loop phosphorylation of CDK4 producing inactive CDK4. Interacts (unphosphorylated form) with CDK2. Also forms ternary complexes with CDKN1A or CDKN2A. Interacts directly with CDKN1A (via its N-terminal); the interaction promotes the assembly of the cyclin D-CDK4 complex, its nuclear translocation and promotes the cyclin D-dependent enzyme activity of CDK4. Interacts with CCND1; the interaction is prevented with the binding of CCND1 to INSM1 during cell cycle progression. Interacts with SEI1 and CCND1. Probably forms a complex composed of chaperones HSP90 and HSP70, co-chaperones CDC37, PPP5C, TSC1 and client protein TSC2, CDK4, AKT, RAF1 and NR3C1; this complex does not contain co-chaperones STIP1/HOP and PTGES3/p23. Interacts with CEBPA (when phosphorylated). Interacts with FNIP1 and FNIP2. Post-translationally, phosphorylation at Thr-172 is required for enzymatic activity. Phosphorylated, in vitro, at this site by CCNH-CDK7, but, in vivo, appears to be phosphorylated by a proline-directed kinase. In the cyclin D-CDK4-CDKN1B complex, this phosphorylation and consequent CDK4 enzyme activity, is dependent on the tyrosine phosphorylation state of CDKN1B. Thus, in proliferating cells, CDK4 within the complex is phosphorylated on Thr-172 in the T-loop. In resting cells, phosphorylation on Thr-172 is prevented by the non-tyrosine-phosphorylated form of CDKN1B.

The protein localises to the cytoplasm. It is found in the nucleus. The protein resides in the nucleus membrane. The catalysed reaction is L-seryl-[protein] + ATP = O-phospho-L-seryl-[protein] + ADP + H(+). It catalyses the reaction L-threonyl-[protein] + ATP = O-phospho-L-threonyl-[protein] + ADP + H(+). Its activity is regulated as follows. Both phosphorylation at Thr-172 and binding of a D-type cyclin are necessary for enzymatic activity. Full activation of the cyclin-D-CDK4 complex appears to require other factors such as recruitment of the substrate via a substrate recruitment motif, and/or formation of the CDKN1B ternary complex. Inhibited by INK4 family members. In resting cells, the non-tyrosine-phosphorylated form of CDKN1B prevents phosphorylation at Thr-172 and inactivation, while, in proliferating cells, tyrosine phosphorylation of CDKN1B allows phosphorylation of Thr-172 of CDK4 and subsequent activation. In terms of biological role, ser/Thr-kinase component of cyclin D-CDK4 (DC) complexes that phosphorylate and inhibit members of the retinoblastoma (RB) protein family including RB1 and regulate the cell-cycle during G(1)/S transition. Phosphorylation of RB1 allows dissociation of the transcription factor E2F from the RB/E2F complexes and the subsequent transcription of E2F target genes which are responsible for the progression through the G(1) phase. Hypophosphorylates RB1 in early G(1) phase. Cyclin D-CDK4 complexes are major integrators of various mitogenenic and antimitogenic signals. Also phosphorylates SMAD3 in a cell-cycle-dependent manner and represses its transcriptional activity. Component of the ternary complex, cyclin D/CDK4/CDKN1B, required for nuclear translocation and activity of the cyclin D-CDK4 complex. The protein is Cyclin-dependent kinase 4 (Cdk4) of Mus musculus (Mouse).